The sequence spans 588 residues: Tripartite motif-containing protein 29 (588 aa).

Residues 1-66 form a disordered region; sequence MEAADASRSN…GSALKPGEGR (66 aa). Phosphoserine is present on residues Ser-21, Ser-28, Ser-58, and Ser-104. Position 106 is a phosphotyrosine (Tyr-106). The B box-type zinc-finger motif lies at 220–260; sequence FEARKCPVHGKTMELFCQTDQTCICYLCMFQEHKNHSTVTV. 4 residues coordinate Zn(2+): Cys-225, His-228, Cys-247, and His-252. Positions 259-352 form a coiled coil; the sequence is TVEEAKAEKE…VKVIMDALDE (94 aa). Thr-476 is subject to Phosphothreonine. A Phosphoserine modification is found at Ser-489.

Interacts with VIM and HINT1. Interacts with IKBKG/NEMO. Interacts with STING1. Constitutively phosphorylated by PKC on serine/threonine in A431 cells. In terms of tissue distribution, expressed in placenta, prostate and thymus.

It is found in the cytoplasm. The protein resides in the lysosome. Plays a crucial role in the regulation of macrophage activation in response to viral or bacterial infections within the respiratory tract. Mechanistically, TRIM29 interacts with IKBKG/NEMO in the lysosome where it induces its 'Lys-48' ubiquitination and subsequent degradation. In turn, the expression of type I interferons and the production of pro-inflammatory cytokines are inhibited. Additionally, induces the 'Lys-48' ubiquitination of STING1 in a similar way, leading to its degradation. This chain is Tripartite motif-containing protein 29 (TRIM29), found in Homo sapiens (Human).